The chain runs to 245 residues: Probable inactive carboxylesterase Os04g0669700 (245 aa).

Active-site charge relay system residues include Ser115 and His201.

Belongs to the AB hydrolase superfamily. AB hydrolase 2 family.

The chain is Probable inactive carboxylesterase Os04g0669700 from Oryza sativa subsp. japonica (Rice).